The following is a 498-amino-acid chain: Probable malate:quinone oxidoreductase (498 aa).

It belongs to the MQO family. FAD serves as cofactor.

It carries out the reaction (S)-malate + a quinone = a quinol + oxaloacetate. The protein operates within carbohydrate metabolism; tricarboxylic acid cycle; oxaloacetate from (S)-malate (quinone route): step 1/1. The protein is Probable malate:quinone oxidoreductase of Prochlorococcus marinus (strain AS9601).